The primary structure comprises 444 residues: DNA primase DnaG (444 aa).

In terms of domain architecture, Toprim spans 186-260 (DSIIVVEGRN…EVDFVARAPP (75 aa)). The Mg(2+) site is built by glutamate 192, aspartate 234, and aspartate 236.

This sequence belongs to the archaeal DnaG primase family. In terms of assembly, forms a ternary complex with MCM helicase and DNA. Component of the archaeal exosome complex. The cofactor is Mg(2+).

The catalysed reaction is ssDNA + n NTP = ssDNA/pppN(pN)n-1 hybrid + (n-1) diphosphate.. Functionally, RNA polymerase that catalyzes the synthesis of short RNA molecules used as primers for DNA polymerase during DNA replication. Also part of the exosome, which is a complex involved in RNA degradation. Acts as a poly(A)-binding protein that enhances the interaction between heteromeric, adenine-rich transcripts and the exosome. This is DNA primase DnaG from Thermoplasma volcanium (strain ATCC 51530 / DSM 4299 / JCM 9571 / NBRC 15438 / GSS1).